The sequence spans 464 residues: MLNAKRIHFIGIAGTGMSALAYICVERGYEVSGSDIQENISTIRLKSKGVKIYKGHNPENVNNVDLVVISSAIPPDNEEYVYAKERNIPILHRSDLLADLTKEKKSIIVGGAHGKTTTTSMIALVLENNKIDPTILVGGELEDIGGNAKLGNGEYLVAEGDESDGSILKLDPYILVITNIDNDHLDYYKSLEKIKDTFLKVIEKVPKGGFAVLNLDCENVRDIIRKIKNKEYYTYGFSNADFKADNIVLNLSGSEFDVYFRNEKLGRVKLRVPGKHNILNSLSAIAVSKILGLDFETTTKALERFQGVQRRIQLKGIIEDDILVFDDYGHHPTEIKATLETLRLYNRRLVVVFQPHRYTRTYFLSKEIAEALSLGDVIILTEIYSAGEKPIPGVSSKNIYDEIREKYPNLEVYLVDNIIEAASKAKSILKKGDLLLTLGAGNVWKVGEALLARGRKDANLEYSQ.

Residue 111–117 participates in ATP binding; the sequence is GAHGKTT.

The protein belongs to the MurCDEF family.

Its subcellular location is the cytoplasm. The enzyme catalyses UDP-N-acetyl-alpha-D-muramate + L-alanine + ATP = UDP-N-acetyl-alpha-D-muramoyl-L-alanine + ADP + phosphate + H(+). It functions in the pathway cell wall biogenesis; peptidoglycan biosynthesis. In terms of biological role, cell wall formation. The sequence is that of UDP-N-acetylmuramate--L-alanine ligase from Dictyoglomus turgidum (strain DSM 6724 / Z-1310).